The sequence spans 685 residues: ABC transporter G family member 26 (685 aa).

The 265-residue stretch at 65–329 (LKFEDVEYKV…FSSLRILPEI (265 aa)) folds into the ABC transporter domain. 124–131 (GPSGSGKT) lines the ATP pocket. The ABC transmembrane type-2 domain occupies 414–623 (DQFLILSRRT…GFRLLLKVQY (210 aa)). Helical transmembrane passes span 432-452 (FDKLRLVQSLGVAVVLGLLWW), 468-488 (LMFYICIFWTSSSLFGAVYVF), 518-538 (MVAHVLYPTFFMIIVYFMAEF), 542-562 (IPCFLFTVLTILLIAITSQGA), 576-596 (AGMIASLVLMLFLLTGGYYVQ), and 648-668 (TINLNGGLQELWVLLAMAFGY).

It belongs to the ABC transporter superfamily. ABCG family. Eye pigment precursor importer (TC 3.A.1.204) subfamily. As to quaternary structure, homo- or heterodimer. As to expression, mostly expressed in flowers, especially in tapetum within anthers.

Its subcellular location is the cell membrane. It localises to the endoplasmic reticulum membrane. In terms of biological role, mediates the transport of sporopollenin precursors (e.g. polyketides) across the tapetum plasma membrane into the anther locule for polymerization on developing microspore walls, thus being required for male fertility and pollen exine formation and patterning prior to tapetum programmed cell death. This chain is ABC transporter G family member 26, found in Arabidopsis thaliana (Mouse-ear cress).